We begin with the raw amino-acid sequence, 554 residues long: Alpha-taxilin (554 aa).

A disordered region spans residues 1-66; sequence MKNQDKKNGP…ARAKAAQPGA (66 aa). A Phosphoserine modification is found at Ser71. The segment at 85–166 is disordered; the sequence is YCVDNNQGGP…RRPQEKKKAK (82 aa). Residues 91 to 103 show a composition bias toward low complexity; it reads QGGPAEEGAQGEP. The span at 143-158 shows a compositional bias: basic and acidic residues; the sequence is EEIRASDEVGDRDHRR. A coiled-coil region spans residues 186 to 491; that stretch reads EEKLAALCKK…NKRVQDLTAG (306 aa). Residues 492-554 form a disordered region; sequence GITDIGSERR…GPGEPTPATA (63 aa). Phosphoserine occurs at positions 515 and 523.

Belongs to the taxilin family. In terms of assembly, binds to the C-terminal coiled coil region of syntaxin family members STX1A, STX3A and STX4A, but not when these proteins are complexed with SNAP25, VAMP2 or STXBP1, suggesting that it interacts with syntaxins that do not form the SNARE complex.

Functionally, may be involved in intracellular vesicle traffic and potentially in calcium-dependent exocytosis in neuroendocrine cells. This Mus musculus (Mouse) protein is Alpha-taxilin (Txlna).